Here is a 1460-residue protein sequence, read N- to C-terminus: Collagen alpha-1(I) chain (1460 aa).

The N-terminal stretch at 1–22 (MFSFVDLRLLLLLAATALLTHG) is a signal peptide. The propeptide at 23 to 157 (QEEGQEEDIP…PPGLGGNFAP (135 aa)) is N-terminal propeptide. The VWFC domain maps to 34–92 (VTCVQNGLRYYDRDVWKPEACRICVCDNGNVLCDDVICDETKNCPGAQVPPGECCPVCP). Positions 96–1213 (ASPTDQETTG…KAHDGGRYYR (1118 aa)) are disordered. A compositionally biased stretch (pro residues) spans 134 to 149 (PGLPGPPGPPGPPGPP). The nonhelical region (N-terminal) stretch occupies residues 158 to 174 (QMSYGYDEKSTGGISVP). Residue Lys-166 is modified to Allysine. Position 167 is a phosphoserine (Ser-167). The triple-helical region stretch occupies residues 175-1188 (GPMGPSGPRG…PGPPGPPGPP (1014 aa)). 4-hydroxyproline occurs at positions 186, 189, 192, 201, 204, 207, 222, 237, 243, 252, and 258. Residues 194-213 (PQGFQGPPGEPGEPGASGPM) are compositionally biased toward low complexity. Over residues 225-239 (NGDDGEAGKPGRPGE) the composition is skewed to basic and acidic residues. Lys-261 carries the post-translational modification 5-hydroxylysine; alternate. O-linked (Gal...) hydroxylysine; alternate glycosylation is present at Lys-261. Residue Ser-267 is modified to Phosphoserine. A compositionally biased stretch (low complexity) spans 275–291 (DAGPAGPKGEPGSPGEN). Residues Pro-285, Pro-288, Pro-294, Pro-303, and Pro-309 each carry the 4-hydroxyproline modification. Positions 314–327 (PAGARGNDGATGAA) are enriched in low complexity. The span at 329–341 (PPGPTGPAGPPGF) shows a compositional bias: pro residues. A 4-hydroxyproline mark is found at Pro-330, Pro-339, Pro-342, Pro-369, Pro-372, Pro-384, Pro-390, Pro-399, Pro-405, Pro-408, and Pro-423. The span at 375–414 (AGAAGPAGNPGADGQPGAKGANGAPGIAGAPGFPGARGPS) shows a compositional bias: low complexity. Position 426 is a 5-hydroxylysine (Lys-426). A 4-hydroxyproline mark is found at Pro-432, Pro-435, Pro-447, Pro-456, Pro-471, Pro-477, Pro-486, and Pro-492. The span at 481-490 (GERGGPGSRG) shows a compositional bias: gly residues. The residue at position 501 (Lys-501) is a 5-hydroxylysine. A 4-hydroxyproline mark is found at Pro-510, Pro-519, Pro-525, Pro-531, Pro-540, Pro-543, Pro-552, Pro-561, Pro-567, Pro-579, Pro-588, Pro-597, Pro-600, Pro-618, Pro-636, Pro-642, Pro-648, Pro-654, Pro-660, Pro-666, Pro-678, Pro-687, Pro-699, Pro-711, Pro-714, Pro-720, Pro-726, and Pro-735. Low complexity predominate over residues 534–560 (KGLTGSPGSPGPDGKTGPPGPAGQDGR). Low complexity predominate over residues 569–588 (ARGQAGVMGFPGPKGAAGEP). Positions 630–657 (QGPAGSPGFQGLPGPAGPPGEAGKPGEQ) are enriched in low complexity. A compositionally biased stretch (low complexity) spans 692 to 720 (PRGANGAPGNDGAKGDAGAPGAPGSQGAP). A Cell attachment site motif is present at residues 741 to 743 (RGD). The residue at position 747 (Lys-747) is a 5-hydroxylysine. 4-hydroxyproline occurs at positions 753, 768, and 774. Residues 780–794 (AGPSGPAGPTGARGA) are compositionally biased toward low complexity. Ser-783 is modified (phosphoserine). 8 positions are modified to 4-hydroxyproline: Pro-795, Pro-801, Pro-804, Pro-813, Pro-819, Pro-837, Pro-846, and Pro-855. The span at 807–834 (AGFAGPPGADGQPGAKGEPGDAGAKGDA) shows a compositional bias: low complexity. The segment covering 836–848 (PPGPAGPTGPPGP) has biased composition (pro residues). A 5-hydroxylysine modification is found at Lys-858. The segment covering 863–879 (SAGPPGATGFPGAAGRV) has biased composition (low complexity). Pro-867 and Pro-873 each carry 4-hydroxyproline. The residue at position 881 (Pro-881) is a 3-hydroxyproline. Pro-882, Pro-891, Pro-894, Pro-915, Pro-924, Pro-933, Pro-942, Pro-960, Pro-969, Pro-972, Pro-978, Pro-993, Pro-999, Pro-1005, Pro-1014, and Pro-1020 each carry 4-hydroxyproline. Over residues 908-917 (ETGPAGRPGE) the composition is skewed to low complexity. Residues 927-951 (AGEKGSPGADGPAGAPGTPGPQGIA) show a composition bias toward low complexity. Residues 992 to 1002 (PPGPMGPPGLA) show a composition bias toward pro residues. Positions 1004–1019 (PPGESGREGSPGAEGS) are enriched in low complexity. A 5-hydroxylysine modification is found at Lys-1029. Positions 1038-1053 (AGPPGAPGAPGAPGPV) are enriched in pro residues. Pro-1041, Pro-1044, and Pro-1047 each carry 4-hydroxyproline. Over residues 1074-1088 (IGPVGARGPAGPQGP) the composition is skewed to low complexity. Residues 1089 to 1091 (RGD) carry the Cell attachment site motif. The segment covering 1089 to 1103 (RGDKGETGEQGDRGI) has biased composition (basic and acidic residues). At Lys-1092 the chain carries 5-hydroxylysine. Residue Lys-1104 is modified to 5-hydroxylysine; alternate. A glycan (O-linked (Gal...) hydroxylysine; alternate) is linked at Lys-1104. 4-hydroxyproline is present on residues Pro-1116, Pro-1119, Pro-1122, Pro-1140, and Pro-1155. Residues 1122–1155 (PGEQGPSGASGPAGPRGPPGSAGSPGKDGLNGLP) show a composition bias toward low complexity. Residue Pro-1160 is modified to 3-hydroxyproline. Pro-1161 bears the 4-hydroxyproline mark. Over residues 1173-1188 (VGPPGPPGPPGPPGPP) the composition is skewed to pro residues. Pro-1175 is subject to 3-hydroxyproline. The residue at position 1176 (Pro-1176) is a 4-hydroxyproline. Residue Pro-1178 is modified to 3-hydroxyproline. Pro-1179 carries the 4-hydroxyproline modification. 3-hydroxyproline is present on Pro-1181. 4-hydroxyproline occurs at positions 1182, 1185, and 1188. The interval 1189 to 1214 (SGGFDFSFLPQPPQEKAHDGGRYYRA) is nonhelical region (C-terminal). Residues 1203–1213 (EKAHDGGRYYR) show a composition bias toward basic and acidic residues. Allysine is present on Lys-1204. The propeptide at 1215-1460 (DDANVVRDRD…GMDIGPVCFL (246 aa)) is C-terminal propeptide. Positions 1225–1460 (LEVDTTLKSL…GMDIGPVCFL (236 aa)) constitute a Fibrillar collagen NC1 domain. 3 disulfide bridges follow: Cys-1255-Cys-1287, Cys-1295-Cys-1458, and Cys-1366-Cys-1411. Ca(2+) is bound by residues Asp-1273, Asn-1275, Gln-1276, Cys-1278, and Asp-1281. Asn-1361 is a glycosylation site (N-linked (GlcNAc...) asparagine).

The protein belongs to the fibrillar collagen family. As to quaternary structure, trimers of one alpha 2(I) and two alpha 1(I) chains. Interacts with MRC2. Interacts with TRAM2. Interacts with MFAP4 in a Ca (2+)-dependent manner. Contains mostly 4-hydroxyproline. Proline residues at the third position of the tripeptide repeating unit (G-X-Y) are hydroxylated in some or all of the chains. Post-translationally, contains 3-hydroxyproline at a few sites. This modification occurs on the first proline residue in the sequence motif Gly-Pro-Hyp, where Hyp is 4-hydroxyproline. In terms of processing, lysine residues at the third position of the tripeptide repeating unit (G-X-Y) are 5-hydroxylated in some or all of the chains. O-glycosylated on hydroxylated lysine residues. The O-linked glycan consists of a Glc-Gal disaccharide.

It is found in the secreted. It localises to the extracellular space. The protein localises to the extracellular matrix. Type I collagen is a member of group I collagen (fibrillar forming collagen). The protein is Collagen alpha-1(I) chain (COL1A1) of Canis lupus familiaris (Dog).